The chain runs to 317 residues: Putative AP2/ERF and B3 domain-containing protein Os01g0140700 (317 aa).

A disordered region spans residues 1–37 (MEQEAAMVVFSCNSGSGGSSSTTDSKQEEEEEEELAA). Acidic residues predominate over residues 27-37 (QEEEEEEELAA). The segment at residues 66 to 121 (RYKGVVPQPNGRWGAQIYERHARVWLGTFPDEEAAARAYDVAALRFRGRDAVTNRA) is a DNA-binding region (AP2/ERF). A DNA-binding region (TF-B3) is located at residues 178–287 (FEKAVTPSDV…EKHLLIDCKK (110 aa)).

It localises to the nucleus. The protein is Putative AP2/ERF and B3 domain-containing protein Os01g0140700 of Oryza sativa subsp. japonica (Rice).